A 119-amino-acid polypeptide reads, in one-letter code: Large ribosomal subunit protein bL20 (119 aa).

This sequence belongs to the bacterial ribosomal protein bL20 family.

Binds directly to 23S ribosomal RNA and is necessary for the in vitro assembly process of the 50S ribosomal subunit. It is not involved in the protein synthesizing functions of that subunit. The polypeptide is Large ribosomal subunit protein bL20 (Vesicomyosocius okutanii subsp. Calyptogena okutanii (strain HA)).